The chain runs to 968 residues: Glycine dehydrogenase (decarboxylating) (968 aa).

Residue lysine 712 is modified to N6-(pyridoxal phosphate)lysine.

The protein belongs to the GcvP family. As to quaternary structure, the glycine cleavage system is composed of four proteins: P, T, L and H. The cofactor is pyridoxal 5'-phosphate.

The enzyme catalyses N(6)-[(R)-lipoyl]-L-lysyl-[glycine-cleavage complex H protein] + glycine + H(+) = N(6)-[(R)-S(8)-aminomethyldihydrolipoyl]-L-lysyl-[glycine-cleavage complex H protein] + CO2. The glycine cleavage system catalyzes the degradation of glycine. The P protein binds the alpha-amino group of glycine through its pyridoxal phosphate cofactor; CO(2) is released and the remaining methylamine moiety is then transferred to the lipoamide cofactor of the H protein. This chain is Glycine dehydrogenase (decarboxylating), found in Prochlorococcus marinus (strain NATL2A).